A 115-amino-acid polypeptide reads, in one-letter code: Synaptobrevin homolog 2 (115 aa).

The segment covering 1–16 (MSSSVPYDPYVPPEES) has biased composition (low complexity). The tract at residues 1 to 28 (MSSSVPYDPYVPPEESNSGANPNSQNKT) is disordered. Residues 1–93 (MSSSVPYDPY…MWWKDLKMRM (93 aa)) are Cytoplasmic-facing. The segment covering 17 to 28 (NSGANPNSQNKT) has biased composition (polar residues). One can recognise a v-SNARE coiled-coil homology domain in the interval 27 to 87 (KTAALRQEID…NRVRKQMWWK (61 aa)). Ser-58 is subject to Phosphoserine. Residue Lys-62 forms a Glycyl lysine isopeptide (Lys-Gly) (interchain with G-Cter in ubiquitin) linkage. Cys-94 carries S-palmitoyl cysteine lipidation. The chain crosses the membrane as a helical; Anchor for type IV membrane protein span at residues 94-112 (CLFLVVIILLVVIIVPIVV). The Vesicular portion of the chain corresponds to 113 to 115 (HFS).

The protein belongs to the synaptobrevin family. Post-translationally, palmitoylated by SWF1.

It localises to the endomembrane system. SNC1 and SNC2 are vesicle-targeting proteins essential for normal secretory traffic between the Golgi and the plasma membrane. They may also be involved in vesicle fusion. The chain is Synaptobrevin homolog 2 (SNC2) from Saccharomyces cerevisiae (strain ATCC 204508 / S288c) (Baker's yeast).